We begin with the raw amino-acid sequence, 708 residues long: Homeobox-leucine zipper protein HDG10 (708 aa).

The segment at 1-24 (MDSSHNDSSSDEEGIDSNNRRHHS) is disordered. The homeobox DNA-binding region spans 16 to 75 (DSNNRRHHSNHQVQRLEAFFHECPHPDDSQRRQLGNELNLKHKQIKFWFQNRRTQARIHN). Positions 119–141 (LCNLQKLRTKNVILKTEYERLSS) form a coiled coil. Residues 162 to 188 (GPSTYGSTSNNRPASYGSSSNHLPQQS) are disordered. Positions 165–188 (TYGSTSNNRPASYGSSSNHLPQQS) are enriched in polar residues. The 239-residue stretch at 218 to 456 (SQLEKNRMFE…LQRMCERLSL (239 aa)) folds into the START domain.

Belongs to the HD-ZIP homeobox family. Class IV subfamily. In terms of assembly, interacts with ANT, BBM and AIL1. As to expression, expressed in exclusively in anthers with highest levels in the tapetum and pollen grains.

The protein resides in the nucleus. Functionally, probable transcription factor. The sequence is that of Homeobox-leucine zipper protein HDG10 from Arabidopsis thaliana (Mouse-ear cress).